Consider the following 365-residue polypeptide: tRNA/tmRNA (uracil-C(5))-methyltransferase (365 aa).

S-adenosyl-L-methionine-binding residues include Gln196, Tyr224, Asn229, Glu245, and Asp298. The active-site Nucleophile is Cys323. Residue Glu357 is the Proton acceptor of the active site.

It belongs to the class I-like SAM-binding methyltransferase superfamily. RNA M5U methyltransferase family. TrmA subfamily.

The catalysed reaction is uridine(54) in tRNA + S-adenosyl-L-methionine = 5-methyluridine(54) in tRNA + S-adenosyl-L-homocysteine + H(+). It carries out the reaction uridine(341) in tmRNA + S-adenosyl-L-methionine = 5-methyluridine(341) in tmRNA + S-adenosyl-L-homocysteine + H(+). Functionally, dual-specificity methyltransferase that catalyzes the formation of 5-methyluridine at position 54 (m5U54) in all tRNAs, and that of position 341 (m5U341) in tmRNA (transfer-mRNA). This chain is tRNA/tmRNA (uracil-C(5))-methyltransferase, found in Nautilia profundicola (strain ATCC BAA-1463 / DSM 18972 / AmH).